The chain runs to 411 residues: MAKINDNYLKLKAGYLFPEIGRRVRAFAAANPEAKVIRLGIGDVTQPLTPTILKAFHDAVDDLASENSFMGYGPEQGYDFLIDAIIEKSYKPLGVDLKTTEMFISDGSKCDCANILDIFALDNTVAIGDPVYPVYNDTNVMIGRTGDADDKGYYKGLVYMPCTEENGFFPAYPKEKVDMIYLCFPNNPTGAVATKAQLKGWVDYALANDSIILFDAAYEAFITDPSIPHSIYEVEGAKKCAIEFRSFSKTAGFTGVRCGLVVVPDELEGTTSNGEKYSFNKLWLRRQTTKFNGASYPVQKAAAAVYTEQGWKETQANIDYYMENARIIREGLSAAGVTVYGGVNAPYIWLKTPAGLTSWDFFDKLLNDCHVVGTPGSGFGPSGEGYFRLSAFGNRDNVVEAVERIKKNLKK.

2 residues coordinate substrate: Tyr-15 and Gly-42. Pyridoxal 5'-phosphate is bound by residues Tyr-72, 108–109 (SK), Tyr-132, Asn-187, Tyr-218, and 246–248 (SFS). Positions 109, 132, and 187 each coordinate substrate. At Lys-249 the chain carries N6-(pyridoxal phosphate)lysine. Residues Arg-257 and Asn-292 each contribute to the pyridoxal 5'-phosphate site. The substrate site is built by Asn-292 and Arg-388.

This sequence belongs to the class-I pyridoxal-phosphate-dependent aminotransferase family. LL-diaminopimelate aminotransferase subfamily. As to quaternary structure, homodimer. Requires pyridoxal 5'-phosphate as cofactor.

It catalyses the reaction (2S,6S)-2,6-diaminopimelate + 2-oxoglutarate = (S)-2,3,4,5-tetrahydrodipicolinate + L-glutamate + H2O + H(+). It participates in amino-acid biosynthesis; L-lysine biosynthesis via DAP pathway; LL-2,6-diaminopimelate from (S)-tetrahydrodipicolinate (aminotransferase route): step 1/1. In terms of biological role, involved in the synthesis of meso-diaminopimelate (m-DAP or DL-DAP), required for both lysine and peptidoglycan biosynthesis. Catalyzes the direct conversion of tetrahydrodipicolinate to LL-diaminopimelate. The sequence is that of LL-diaminopimelate aminotransferase from Citrifermentans bemidjiense (strain ATCC BAA-1014 / DSM 16622 / JCM 12645 / Bem) (Geobacter bemidjiensis).